Reading from the N-terminus, the 545-residue chain is Thermosome subunit alpha (545 aa).

This sequence belongs to the TCP-1 chaperonin family. As to quaternary structure, forms a Heterooligomeric complex of two stacked eight-membered rings.

In terms of biological role, molecular chaperone; binds unfolded polypeptides in vitro, and has a weak ATPase activity. This chain is Thermosome subunit alpha (thsA), found in Archaeoglobus fulgidus (strain ATCC 49558 / DSM 4304 / JCM 9628 / NBRC 100126 / VC-16).